Reading from the N-terminus, the 332-residue chain is Alpha/beta hydrolase domain-containing protein aho-3 (332 aa).

Residues 1-15 are compositionally biased toward low complexity; it reads MSSGAPSGSSMSSTP. Residues 1 to 24 form a disordered region; it reads MSSGAPSGSSMSSTPGSPPPRAGG. Residues serine 191, aspartate 256, and histidine 285 each act as charge relay system in the active site.

The protein belongs to the AB hydrolase superfamily. ABHD17 family. In terms of processing, palmitoylated on cysteine residues located in a cysteine cluster at the N-terminus which promotes membrane localization and localization to sensory neuron endings. In terms of tissue distribution, expressed in a subset of neurons including AIY, HSN, ADF, AFD, AWC, AWB and NSM, hypodermis, pharyngeal muscle and intestine.

It is found in the cell membrane. It localises to the cytoplasmic vesicle membrane. The catalysed reaction is S-hexadecanoyl-L-cysteinyl-[protein] + H2O = L-cysteinyl-[protein] + hexadecanoate + H(+). In terms of biological role, hydrolyzes fatty acids from S-acylated cysteine residues in proteins. Acts in sensory neurons including AWC to regulate starvation-induced thermotaxis plasticity and salt learning behavior. This Caenorhabditis elegans protein is Alpha/beta hydrolase domain-containing protein aho-3.